We begin with the raw amino-acid sequence, 174 residues long: Peptide deformylase (174 aa).

Fe cation is bound by residues Cys-96 and His-138. The active site involves Glu-139. Residue His-142 coordinates Fe cation.

It belongs to the polypeptide deformylase family. Fe(2+) serves as cofactor.

The enzyme catalyses N-terminal N-formyl-L-methionyl-[peptide] + H2O = N-terminal L-methionyl-[peptide] + formate. Removes the formyl group from the N-terminal Met of newly synthesized proteins. Requires at least a dipeptide for an efficient rate of reaction. N-terminal L-methionine is a prerequisite for activity but the enzyme has broad specificity at other positions. The chain is Peptide deformylase from Helicobacter pylori (strain J99 / ATCC 700824) (Campylobacter pylori J99).